The following is a 78-amino-acid chain: UPF0401 protein YubL (78 aa).

This sequence belongs to the UPF0401 family.

The chain is UPF0401 protein YubL (yubL) from Salmonella typhi.